A 237-amino-acid chain; its full sequence is Orotidine 5'-phosphate decarboxylase (237 aa).

Residues D11, K34, D61–T70, T123, R185, Q194, G214, and R215 each bind substrate. The Proton donor role is filled by K63.

This sequence belongs to the OMP decarboxylase family. Type 1 subfamily. As to quaternary structure, homodimer.

It carries out the reaction orotidine 5'-phosphate + H(+) = UMP + CO2. It participates in pyrimidine metabolism; UMP biosynthesis via de novo pathway; UMP from orotate: step 2/2. Catalyzes the decarboxylation of orotidine 5'-monophosphate (OMP) to uridine 5'-monophosphate (UMP). This Ligilactobacillus salivarius (strain UCC118) (Lactobacillus salivarius) protein is Orotidine 5'-phosphate decarboxylase.